The following is a 351-amino-acid chain: Outer membrane protein A (351 aa).

A signal peptide spans 1 to 21 (MKKTAIAITVALAGFATVAQA). 8 beta stranded membrane passes run 27–37 (TWYTGAKLGWS), 55–66 (QLGAGAFGGYQV), 70–78 (VGFEMGYDW), 96–107 (QGVQLTAKLGYP), 112–120 (LDVYTRLGG), 147–156 (PVFAGGVEWA), 161–168 (IATRLEYQ), and 187–195 (LLSLGVSYR). 4 tandem repeats follow at residues 206–207 (AP), 208–209 (AP), 210–211 (AP), and 212–213 (AP). Residues 206–213 (APAPAPAP) form a 4 X 2 AA tandem repeats of A-P region. The 129-residue stretch at 215–343 (VQTKHFTLKS…RVEIEVKGIK (129 aa)) folds into the OmpA-like domain. A disulfide bridge connects residues cysteine 316 and cysteine 328.

This sequence belongs to the outer membrane OOP (TC 1.B.6) superfamily. OmpA family. In terms of assembly, monomer and homodimer.

The protein localises to the cell outer membrane. In terms of biological role, with TolR probably plays a role in maintaining the position of the peptidoglycan cell wall in the periplasm. Acts as a porin with low permeability that allows slow penetration of small solutes; an internal gate slows down solute passage. Functionally, required for conjugation with F-type plasmids; probably serves as the mating receptor on recipient cells. This is Outer membrane protein A from Shigella dysenteriae.